The chain runs to 187 residues: Prepronociceptin (187 aa).

Residues 1–19 form the signal peptide; that stretch reads MKILFCDVLLLSLLSSVFS. A propeptide spanning residues 20–95 is cleaved from the precursor; that stretch reads SCPRDCLTCQ…QPKASEMQHL (76 aa). 3 repeat units span residues 109-114, 115-120, and 121-126. A 3 X 6 AA tandem repeats of D-A-E-P-G-A region spans residues 109 to 126; the sequence is DAEPGADAEPGADAEPGA. The disordered stretch occupies residues 109-133; the sequence is DAEPGADAEPGADAEPGADDAEEVE. Residues 112–131 are compositionally biased toward acidic residues; sequence PGADAEPGADAEPGADDAEE. Positions 180–187 are excised as a propeptide; the sequence is TLHQNGNV.

It belongs to the opioid neuropeptide precursor family. Specific enzymatic cleavages at paired basic residues probably yield other active peptides besides nociceptin. Post-translationally, the N-terminal domain contains 6 conserved cysteines thought to be involved in disulfide bonding and/or processing. As to expression, brain and spinal cord. Low levels in kidney and spleen.

It is found in the secreted. In terms of biological role, ligand of the opioid receptor-like receptor OPRL1. It may act as a transmitter in the brain by modulating nociceptive and locomotor behavior. May be involved in neuronal differentiation and development. When administered intracerebroventricularly, nociceptin induces hyperalgesia and decreases locomotor activity. Its function is as follows. Blocks nociceptin action in pain transmission by inhibiting nociceptin-induced hyperalgesia and allodynia. Functionally, has potent analgesic activity. This Mus musculus (Mouse) protein is Prepronociceptin (Pnoc).